The chain runs to 536 residues: Caspase A (536 aa).

A propeptide spans 1–273 (MVLKTIEDNC…DSQSRMPRTD (273 aa)) (removed in mature form by autoprocessing). Residues histidine 364 and cysteine 406 contribute to the active site.

Belongs to the peptidase C14A family. As to quaternary structure, heterodimer formed by the tight association of the large subunit p16 and the small subunit p14. Autocatalytic cleavage removes the propeptide and generates the two active subunits p16 and p14 in vitro. Cannot be cleaved by ced-3 in vitro. Isoform a: Expression is restricted to the late germline pachytene stage of meiosis I in both L4 larvae and adult hermaphrodite gonads. Isoform b: Expression is restricted to the late germline pachytene stage of meiosis I in both L4 larvae and adult hermaphrodite gonads.

It catalyses the reaction Strict requirement for an Asp residue at position P1 and has a preferred cleavage sequence of Tyr-Val-Ala-Asp-|-.. With respect to regulation, inhibited by cysteine protease inhibitor iodoacetic acid (CH3COOI) but not by N-[N-(L-3-transcarboxirane-2-carbonyl)-leucyl]-agmatine (E-64) or benzyloxycarbonyl-DEVD-fluoro-methyl ketone (Z-DEVD-FMK). In terms of biological role, cysteine protease which, in vitro, cleaves itself and caspase ced-3 into their mature active forms. Also cleaves, in vitro, inactive caspase csp-2 isoform b. Required maternally to induce apoptosis in a subset of cells fated to die during embryogenesis, mostly independently of the ced-9, ced-4 and ced-3 canonical apoptosis pathway. Involved in the degeneration of dopaminergic CEP neurons in response to high Mn(2+) levels. Functionally, dispensable for regulating apoptosis during embryogenesis. The chain is Caspase A from Caenorhabditis elegans.